Reading from the N-terminus, the 412-residue chain is Cinnamoyl-CoA:phenyllactate CoA-transferase (412 aa).

Asparagine 102 contacts CoA. Catalysis depends on aspartate 176, which acts as the Nucleophile.

In terms of assembly, homodimer. Part of the heterotrimeric phenyllactate dehydratase complex FldABC, composed of (R)-phenyllactate CoA-transferase (FldA) and a heterodimeric (R)-phenyllactyl-CoA dehydratase (FldB and FldC).

The catalysed reaction is (E)-cinnamoyl-CoA + (R)-3-phenyllactate = (R)-3-phenyllactoyl-CoA + (E)-cinnamate. Its pathway is amino-acid degradation; L-phenylalanine degradation. Its function is as follows. Component of the phenyllactate dehydratase complex FldABC that is involved in the fermentation of L-phenylalanine via a Stickland reaction. This complex catalyzes the reversible syn-dehydration of (R)-phenyllactate to (E)-cinnamate in two steps, a CoA-transfer from cinnamoyl-CoA to phenyllactate, catalyzed by FldA, followed by the dehydration of phenyllactyl-CoA to cinnamoyl-CoA, catalyzed by FldB and FldC. In vitro, FldA can use 3-phenylpropanoate as a better CoA-acceptor than phenyllactate. The chain is Cinnamoyl-CoA:phenyllactate CoA-transferase from Clostridium sporogenes.